Consider the following 687-residue polypeptide: Glycine--tRNA ligase beta subunit (687 aa).

This sequence belongs to the class-II aminoacyl-tRNA synthetase family. As to quaternary structure, tetramer of two alpha and two beta subunits.

It is found in the cytoplasm. The enzyme catalyses tRNA(Gly) + glycine + ATP = glycyl-tRNA(Gly) + AMP + diphosphate. The chain is Glycine--tRNA ligase beta subunit from Citrifermentans bemidjiense (strain ATCC BAA-1014 / DSM 16622 / JCM 12645 / Bem) (Geobacter bemidjiensis).